The chain runs to 310 residues: Putative S-adenosyl-L-methionine-dependent methyltransferase Mvan_1346 (310 aa).

S-adenosyl-L-methionine contacts are provided by residues aspartate 136 and 165–166; that span reads DL.

This sequence belongs to the UPF0677 family.

Functionally, exhibits S-adenosyl-L-methionine-dependent methyltransferase activity. The polypeptide is Putative S-adenosyl-L-methionine-dependent methyltransferase Mvan_1346 (Mycolicibacterium vanbaalenii (strain DSM 7251 / JCM 13017 / BCRC 16820 / KCTC 9966 / NRRL B-24157 / PYR-1) (Mycobacterium vanbaalenii)).